We begin with the raw amino-acid sequence, 294 residues long: NAD kinase (294 aa).

Asp-74 functions as the Proton acceptor in the catalytic mechanism. Residues 74–75 (DG), 148–149 (NE), His-159, Arg-176, Asp-178, 189–194 (TAYSLS), and Gln-249 each bind NAD(+).

Belongs to the NAD kinase family. A divalent metal cation serves as cofactor.

It localises to the cytoplasm. It carries out the reaction NAD(+) + ATP = ADP + NADP(+) + H(+). Functionally, involved in the regulation of the intracellular balance of NAD and NADP, and is a key enzyme in the biosynthesis of NADP. Catalyzes specifically the phosphorylation on 2'-hydroxyl of the adenosine moiety of NAD to yield NADP. This Vibrio atlanticus (strain LGP32) (Vibrio splendidus (strain Mel32)) protein is NAD kinase.